Here is a 208-residue protein sequence, read N- to C-terminus: Uracil phosphoribosyltransferase (208 aa).

Residues Arg78, Arg103, and 130–138 each bind 5-phospho-alpha-D-ribose 1-diphosphate; that span reads DPMLATGGS. Uracil-binding positions include Ile193 and 198-200; that span reads GDA. A 5-phospho-alpha-D-ribose 1-diphosphate-binding site is contributed by Asp199.

This sequence belongs to the UPRTase family. Requires Mg(2+) as cofactor.

It catalyses the reaction UMP + diphosphate = 5-phospho-alpha-D-ribose 1-diphosphate + uracil. The protein operates within pyrimidine metabolism; UMP biosynthesis via salvage pathway; UMP from uracil: step 1/1. Allosterically activated by GTP. Its function is as follows. Catalyzes the conversion of uracil and 5-phospho-alpha-D-ribose 1-diphosphate (PRPP) to UMP and diphosphate. In Salmonella agona (strain SL483), this protein is Uracil phosphoribosyltransferase.